Here is a 534-residue protein sequence, read N- to C-terminus: Protein tweety homolog 2 (534 aa).

The Extracellular portion of the chain corresponds to methionine 1–threonine 44. Residues leucine 45–valine 65 traverse the membrane as a helical segment. Residues tyrosine 66–cysteine 87 lie on the Cytoplasmic side of the membrane. Residues cysteine 88 to phenylalanine 108 form a helical membrane-spanning segment. The Extracellular segment spans residues tyrosine 109–tryptophan 213. 2 residues coordinate Ca(2+): glutamate 113 and aspartate 116. Asparagine 129 carries N-linked (GlcNAc...) asparagine glycosylation. Residues arginine 164 to aspartate 166 carry the RGD motif. Asparagine 197 carries an N-linked (GlcNAc...) asparagine glycan. A helical membrane pass occupies residues leucine 214–leucine 234. At alanine 235–cysteine 240 the chain is on the cytoplasmic side. Residues leucine 241 to alanine 261 traverse the membrane as a helical segment. The Extracellular portion of the chain corresponds to leucine 262–glycine 388. 2 disulfides stabilise this stretch: cysteine 274/cysteine 382 and cysteine 300/cysteine 367. N-linked (GlcNAc...) asparagine glycosylation is found at asparagine 283 and asparagine 352. A helical membrane pass occupies residues methionine 389 to alanine 409. At methionine 410 to alanine 534 the chain is on the cytoplasmic side.

This sequence belongs to the tweety family. Forms cis-homodimers in the presence of Ca(+2) and forms monomers and trans-dimers in the absence of Ca(2+).

The protein resides in the cell membrane. It catalyses the reaction chloride(in) = chloride(out). The catalysed reaction is L-glutamate(out) = L-glutamate(in). In terms of biological role, may act as a calcium-independent, swelling-dependent volume-regulated anion channel (VRAC-swell) which plays a pivotal role in the process of regulatory volume decrease (RVD) in the brain through the efflux of anions like chloride and organic osmolytes like glutamate. Probable large-conductance Ca(2+)-activated chloride channel. In Xenopus tropicalis (Western clawed frog), this protein is Protein tweety homolog 2 (ttyh2).